Here is a 231-residue protein sequence, read N- to C-terminus: Claudin-10 (231 aa).

Residues 1–21 (MASTALEIVAFVVSISGWVLV) form a helical membrane-spanning segment. The Extracellular segment spans residues 22 to 80 (SSTLPTDYWKVSTIDGTVITTATYFANLWKICVTDSTGVANCKEFPSMLALDGYIQACR). A helical membrane pass occupies residues 81–101 (GLMIAAVSLGFFGSIFALFGM). Residues 102-115 (KCTKVGGSDQAKAK) lie on the Cytoplasmic side of the membrane. A helical transmembrane segment spans residues 116-136 (IACLAGIVFILSGLCSMTGCS). At 137 to 160 (LYANKITTEFFDPLYMEQKYELGA) the chain is on the extracellular side. The chain crosses the membrane as a helical span at residues 161–181 (ALFIGWAGASLCIIGGVIFCF). At 182–231 (SISDNNKTPRMGYTYNGPTSAMSSRTKYQGGEGDFKTTGPSKQFDKNAYV) the chain is on the cytoplasmic side.

This sequence belongs to the claudin family. In terms of assembly, can form homodimers both in trans (interaction between CLDN10 molecules in opposing membranes) and in cis (interaction between CLDN10 molecules within one membrane). Interacts with CLDN19. In terms of tissue distribution, widely expressed, with highest expression detected in brain cortex, kidney and lung. In kidney, the expression is highest in medulla, with transcripts being detected in medullary thick ascending limb of Henle's loop (mTAL) and outer and inner medullary collecting ducts. Expressed in salivary glands and skin. Detected in kidney with transcripts being detected in PCT, mTAL and cortical collecting duct. Detected in uterus. Expressed in proximal tubules (at protein level). As to expression, only detected in kidney and uterus. In terms of tissue distribution, detected in kidney with transcripts being detected in PCT, mTAL and cortical collecting duct. Detected in uterus. Expressed in the inner ear where it is detected in organ of Corti, marginal cells of stria vascularis, Reissner's membrane and spiral limbus (at protein level).

It is found in the cell junction. Its subcellular location is the tight junction. The protein localises to the cell membrane. The protein resides in the endoplasmic reticulum. It catalyses the reaction Na(+)(in) = Na(+)(out). The catalysed reaction is Li(+)(in) = Li(+)(out). It carries out the reaction K(+)(in) = K(+)(out). The enzyme catalyses Rb(+)(in) = Rb(+)(out). It catalyses the reaction Cs(+)(in) = Cs(+)(out). The catalysed reaction is NH4(+)(in) = NH4(+)(out). It carries out the reaction methylamine(out) = methylamine(in). The enzyme catalyses Mg(2+)(in) = Mg(2+)(out). It catalyses the reaction Ca(2+)(in) = Ca(2+)(out). The catalysed reaction is Sr(2+)(in) = Sr(2+)(out). It carries out the reaction chloride(in) = chloride(out). The enzyme catalyses nitrate(in) = nitrate(out). In terms of biological role, forms paracellular channels: polymerizes in tight junction strands with cation- and anion-selective channels through the strands, conveying epithelial permeability in a process known as paracellular tight junction permeability. Functionally, forms cation-selective paracellular channels. In sweat glands and in the thick ascending limb (TAL) of Henle's loop in kidney, it controls paracellular sodium permeability which is essential for proper sweat production and renal function. Forms anion-selective paracellular channels. In renal proximal tubules, it conveys selective chloride over hydrogencarbonate anion permeability which is required for renal chloride reabsorption and salt homeostasis. In Mus musculus (Mouse), this protein is Claudin-10.